The chain runs to 217 residues: AFG2-interacting ribosome maturation factor (217 aa).

In terms of assembly, part of the 55LCC heterohexameric ATPase complex composed at least of AIRIM, AFG2A, AFG2B and CINP. Does not associate with pre-60S ribosomal particles. Phosphorylated on serines by CK2 kinase.

The protein resides in the nucleus. It localises to the cytoplasm. In terms of biological role, part of the 55LCC heterohexameric ATPase complex which is chromatin-associated and promotes replisome proteostasis to maintain replication fork progression and genome stability. Required for replication fork progression, sister chromatid cohesion, and chromosome stability. The ATPase activity is specifically enhanced by replication fork DNA and is coupled to cysteine protease-dependent cleavage of replisome substrates in response to replication fork damage. Uses ATPase activity to process replisome substrates in S-phase, facilitating their proteolytic turnover from chromatin to ensure DNA replication and mitotic fidelity. Involved in the cytoplasmic maturation steps of pre-60S ribosomal particles by promoting the release of shuttling protein RSL24D1/RLP24 from the pre-ribosomal particles. This is AFG2-interacting ribosome maturation factor (Airim) from Mus musculus (Mouse).